The chain runs to 147 residues: E3 ubiquitin-protein ligase RNF181 homolog (147 aa).

Residues 70-111 (CSVCKEPAEEGQKYRILPCKHEFHEECILLWLKKTNSCPLCR) form an RING-type; atypical zinc finger.

It belongs to the RNF181 family.

It catalyses the reaction S-ubiquitinyl-[E2 ubiquitin-conjugating enzyme]-L-cysteine + [acceptor protein]-L-lysine = [E2 ubiquitin-conjugating enzyme]-L-cysteine + N(6)-ubiquitinyl-[acceptor protein]-L-lysine.. It participates in protein modification; protein ubiquitination. E3 ubiquitin-protein ligase which accepts ubiquitin from an E2 ubiquitin-conjugating enzyme in the form of a thioester and then directly transfers the ubiquitin to targeted substrates. The sequence is that of E3 ubiquitin-protein ligase RNF181 homolog from Drosophila melanogaster (Fruit fly).